We begin with the raw amino-acid sequence, 299 residues long: MADQLIRATAADGGIRAVGVISTRLTEEARVRHKLSYVATAALGRAMTSGLLLASSMKREGSRVNIRIKGDGPLGGLLVDAGLDGTVRGYVGNPSVELPPNAKGKLDVGGAVGRDGYLYVVRDVGYGYPYSSTVELVSGEVGDDVAHYLITSEQTPSALLVGVFVDVTGVIASGGILLQVMPKAARDEELVSTLESRVGQLTGFTPLLRAGKTLPEIFEQLLGDLGLVILPEIQMVRFDCHCSFERVLGALKMLGEAELQDMIEKDDGAEATCQFCGEVYQASREHLTQLIEDLRAQSG.

2 disulfide bridges follow: cysteine 240–cysteine 242 and cysteine 273–cysteine 276.

The protein belongs to the HSP33 family. In terms of processing, under oxidizing conditions two disulfide bonds are formed involving the reactive cysteines. Under reducing conditions zinc is bound to the reactive cysteines and the protein is inactive.

It localises to the cytoplasm. Redox regulated molecular chaperone. Protects both thermally unfolding and oxidatively damaged proteins from irreversible aggregation. Plays an important role in the bacterial defense system toward oxidative stress. This is 33 kDa chaperonin from Gloeothece citriformis (strain PCC 7424) (Cyanothece sp. (strain PCC 7424)).